The chain runs to 839 residues: Protein translocase subunit SecA (839 aa).

ATP contacts are provided by residues Q85, 103 to 107 (GEGKT), and D493. The span at 780 to 790 (QIHEQERERAS) shows a compositional bias: basic and acidic residues. The disordered stretch occupies residues 780–839 (QIHEQERERASQRATTAAPQNIQSQQSANTDDLPKVERNEACPCGSGKKFKNCHGRKSFS). Residues 791–809 (QRATTAAPQNIQSQQSANT) are compositionally biased toward polar residues. 4 residues coordinate Zn(2+): C821, C823, C832, and H833. A compositionally biased stretch (basic residues) spans 827-839 (KKFKNCHGRKSFS).

The protein belongs to the SecA family. As to quaternary structure, monomer and homodimer. Part of the essential Sec protein translocation apparatus which comprises SecA, SecYEG and auxiliary proteins SecDF. Other proteins may also be involved. Requires Zn(2+) as cofactor.

Its subcellular location is the cell membrane. It localises to the cytoplasm. The enzyme catalyses ATP + H2O + cellular proteinSide 1 = ADP + phosphate + cellular proteinSide 2.. Its function is as follows. Part of the Sec protein translocase complex. Interacts with the SecYEG preprotein conducting channel. Has a central role in coupling the hydrolysis of ATP to the transfer of proteins into and across the cell membrane, serving as an ATP-driven molecular motor driving the stepwise translocation of polypeptide chains across the membrane. The sequence is that of Protein translocase subunit SecA from Streptococcus pyogenes serotype M1.